The sequence spans 69 residues: Beta-defensin 43 (69 aa).

The signal sequence occupies residues 1 to 22 (MRVLFSILGVLTLLSIVPLARS). Cystine bridges form between Cys-29–Cys-56 and Cys-35–Cys-49.

The protein belongs to the beta-defensin family.

It localises to the secreted. Functionally, has bactericidal activity. This Mus musculus (Mouse) protein is Beta-defensin 43 (Defb43).